The chain runs to 394 residues: Ribulose bisphosphate carboxylase large chain (394 aa).

Lysine 5 carries the post-translational modification N6,N6,N6-trimethyllysine. Positions 114 and 164 each coordinate substrate. The active-site Proton acceptor is lysine 166. Substrate is bound at residue lysine 168. Positions 192, 194, and 195 each coordinate Mg(2+). Residue lysine 192 is modified to N6-carboxylysine. Histidine 285 (proton acceptor) is an active-site residue. Substrate is bound by residues arginine 286, histidine 318, and serine 370.

Belongs to the RuBisCO large chain family. Type I subfamily. As to quaternary structure, heterohexadecamer of 8 large chains and 8 small chains. Requires Mg(2+) as cofactor.

It is found in the plastid. The protein resides in the chloroplast. The enzyme catalyses 2 (2R)-3-phosphoglycerate + 2 H(+) = D-ribulose 1,5-bisphosphate + CO2 + H2O. The catalysed reaction is D-ribulose 1,5-bisphosphate + O2 = 2-phosphoglycolate + (2R)-3-phosphoglycerate + 2 H(+). Its function is as follows. RuBisCO catalyzes two reactions: the carboxylation of D-ribulose 1,5-bisphosphate, the primary event in carbon dioxide fixation, as well as the oxidative fragmentation of the pentose substrate in the photorespiration process. Both reactions occur simultaneously and in competition at the same active site. The polypeptide is Ribulose bisphosphate carboxylase large chain (rbcL) (Victoria cruziana (Santa Cruz water lily)).